A 129-amino-acid polypeptide reads, in one-letter code: Small ribosomal subunit protein uS11 (129 aa).

Belongs to the universal ribosomal protein uS11 family. Part of the 30S ribosomal subunit. Interacts with proteins S7 and S18. Binds to IF-3.

Located on the platform of the 30S subunit, it bridges several disparate RNA helices of the 16S rRNA. Forms part of the Shine-Dalgarno cleft in the 70S ribosome. The protein is Small ribosomal subunit protein uS11 of Yersinia enterocolitica serotype O:8 / biotype 1B (strain NCTC 13174 / 8081).